We begin with the raw amino-acid sequence, 473 residues long: Ras-GEF domain-containing family member 1B (473 aa).

The region spanning 34 to 161 (HDNNLLSGSL…NVQQMMQCLI (128 aa)) is the N-terminal Ras-GEF domain. Residues 205–453 (DPYTLAQQLT…YLASYESEGP (249 aa)) form the Ras-GEF domain.

As to quaternary structure, interacts with CCDC124 during cytokinesis. Interacts with Ras family proteins. In terms of tissue distribution, constitutively expressed in brain, intestine and testis. Low constitutive expression, if any, in heart, lung, lymph nodes and thymus. Up-regulated in heart, kidney, liver, lymph nodes, spleen and thymus at day 20 after infection with Trypanosoma cruzi. Not detected in muscle.

It localises to the early endosome. The protein resides in the late endosome. Its subcellular location is the midbody. Its function is as follows. Guanine nucleotide exchange factor (GEF) with specificity for RAP2A, it doesn't seems to activate other Ras family proteins (in vitro). The polypeptide is Ras-GEF domain-containing family member 1B (Rasgef1b) (Mus musculus (Mouse)).